The sequence spans 143 residues: ATP synthase F(0) complex subunit C2, mitochondrial (143 aa).

A mitochondrion-targeting transit peptide spans 1 to 68; that stretch reads MYTCAKFVST…RSFQTSAISR (68 aa). The helical transmembrane segment at 84–104 threads the bilayer; the sequence is VGVAGSGAGIGTVFGSLIIGY. At lysine 111 the chain carries N6,N6,N6-trimethyllysine. A helical transmembrane segment spans residues 119–139; sequence ILGFALSEAMGLFCLMVAFLI.

It belongs to the ATPase C chain family. F-type ATPases have 2 components, CF(1) - the catalytic core - and CF(0) - the membrane proton channel. CF(1) has five subunits: alpha(3), beta(3), gamma(1), delta(1), epsilon(1). CF(0) has three main subunits: a, b and c. Interacts with DNAJC30; interaction is direct. In terms of processing, trimethylated by ATPSCKMT at Lys-111. Methylation is required for proper incorporation of the C subunit into the ATP synthase complex and mitochondrial respiration.

The protein resides in the mitochondrion membrane. In terms of biological role, mitochondrial membrane ATP synthase (F(1)F(0) ATP synthase or Complex V) produces ATP from ADP in the presence of a proton gradient across the membrane which is generated by electron transport complexes of the respiratory chain. F-type ATPases consist of two structural domains, F(1) - containing the extramembraneous catalytic core and F(0) - containing the membrane proton channel, linked together by a central stalk and a peripheral stalk. During catalysis, ATP synthesis in the catalytic domain of F(1) is coupled via a rotary mechanism of the central stalk subunits to proton translocation. Part of the complex F(0) domain. A homomeric c-ring of probably 10 subunits is part of the complex rotary element. The protein is ATP synthase F(0) complex subunit C2, mitochondrial of Bos taurus (Bovine).